Consider the following 137-residue polypeptide: Nucleoside diphosphate kinase (137 aa).

Positions 9, 57, 85, 91, 102, and 112 each coordinate ATP. H115 (pros-phosphohistidine intermediate) is an active-site residue.

Belongs to the NDK family. As to quaternary structure, homotetramer. Mg(2+) serves as cofactor.

The protein localises to the cytoplasm. It carries out the reaction a 2'-deoxyribonucleoside 5'-diphosphate + ATP = a 2'-deoxyribonucleoside 5'-triphosphate + ADP. The catalysed reaction is a ribonucleoside 5'-diphosphate + ATP = a ribonucleoside 5'-triphosphate + ADP. In terms of biological role, major role in the synthesis of nucleoside triphosphates other than ATP. The ATP gamma phosphate is transferred to the NDP beta phosphate via a ping-pong mechanism, using a phosphorylated active-site intermediate. The sequence is that of Nucleoside diphosphate kinase from Campylobacter jejuni subsp. jejuni serotype O:2 (strain ATCC 700819 / NCTC 11168).